Consider the following 566-residue polypeptide: Protein downstream neighbor of Son (566 aa).

The segment at 1–110 is disordered; sequence MALSVPGYSP…QPEAPVPFLD (110 aa). S28 and S34 each carry phosphoserine. The segment covering 62 to 72 has biased composition (gly residues); sequence GGRGGGSGGGP. A compositionally biased stretch (low complexity) spans 73 to 82; sequence AAARRNPFAR.

This sequence belongs to the DONSON family. In terms of assembly, component of the replisome complex composed of at least DONSON, MCM2, MCM7, PCNA and TICRR; interaction at least with PCNA occurs during DNA replication. As to expression, expressed in the brain, with higher levels in prenatal compared to adult brain.

It is found in the nucleus. In terms of biological role, replisome component that maintains genome stability by protecting stalled or damaged replication forks. After the induction of replication stress, required for the stabilization of stalled replication forks, the efficient activation of the intra-S-phase and G/2M cell-cycle checkpoints and the maintenance of genome stability. This is Protein downstream neighbor of Son (DONSON) from Homo sapiens (Human).